Consider the following 137-residue polypeptide: Actin-depolymerizing factor 2 (137 aa).

The ADF-H domain maps to 5–137 (ASGMAVHDDC…GLDVFKSRTN (133 aa)). A Phosphoserine modification is found at serine 6.

It belongs to the actin-binding proteins ADF family. In terms of assembly, interacts with AIP1-1.

It is found in the cytoplasm. The protein localises to the cytoskeleton. Actin-depolymerizing protein. Severs actin filaments (F-actin) and binds to actin monomers. Required for normal cell growth, plant development, cell organ expansion and flowering. Essential for root-knot nematode infection. This Arabidopsis thaliana (Mouse-ear cress) protein is Actin-depolymerizing factor 2 (ADF2).